Here is a 378-residue protein sequence, read N- to C-terminus: MLKKLKDYRRIVVKIGSALLVDRATGLKREWLESLGQDIAALQHAGVEVLVVSSGAIALGRTVLGLPKKALKLEESQAAAAAGQIALAKAYADVLGGHGIKSGQILVTLSDTEERRRYLNARATIETLLKLKAVPIINENDTVATTEIRYGDNDRLAARVATMMGADLLILLSDIDGLYTAPPHKNPDAQFLPFVETITPQIEAMAGAAASELSRGGMKTKLDAGKIANAAGTAMIITSGTRFGPLSAIDRGERATLFEAAHAPVNAWKTWISGNLEPAGRLTVDAGAVKALKSGKSLLPAGVKEVDGDFERGDTVAVMNEDGREIARGLIAYDAADARKVAGHKSDEISAILGYDARAAMIHRNDLVVRAASDAKAA.

An ATP-binding site is contributed by K14. Residues S54, D141, and N153 each coordinate substrate. 173 to 174 (SD) is a binding site for ATP. The region spanning 279-356 (AGRLTVDAGA…DEISAILGYD (78 aa)) is the PUA domain.

The protein belongs to the glutamate 5-kinase family.

It is found in the cytoplasm. The enzyme catalyses L-glutamate + ATP = L-glutamyl 5-phosphate + ADP. It functions in the pathway amino-acid biosynthesis; L-proline biosynthesis; L-glutamate 5-semialdehyde from L-glutamate: step 1/2. In terms of biological role, catalyzes the transfer of a phosphate group to glutamate to form L-glutamate 5-phosphate. This Brucella canis (strain ATCC 23365 / NCTC 10854 / RM-666) protein is Glutamate 5-kinase.